The chain runs to 560 residues: Serine palmitoyltransferase 2 (560 aa).

The chain crosses the membrane as a helical span at residues Pro65–Leu85. Lys377 carries the post-translational modification N6-(pyridoxal phosphate)lysine.

It belongs to the class-II pyridoxal-phosphate-dependent aminotransferase family. In terms of assembly, component of the serine palmitoyltransferase (SPT) complex, which is composed of SPTLC1, SPTLC2 or SPTLC3 and SPTSSA or SPTSSB. The heterodimer consisting of SPTLC1 and SPTLC2/SPTLC3 forms the catalytic core of the enzyme, while SPTSSA or SPTSSB subunits determine substrate specificity. SPT also interacts with ORMDL proteins, especially ORMDL3, which negatively regulate SPT activity in the presence of ceramides. Forms dimers of heterodimers with SPTLC1. Pyridoxal 5'-phosphate is required as a cofactor. In terms of tissue distribution, expressed in astrocytes.

The protein resides in the endoplasmic reticulum membrane. It catalyses the reaction L-serine + hexadecanoyl-CoA + H(+) = 3-oxosphinganine + CO2 + CoA. The enzyme catalyses octadecanoyl-CoA + L-serine + H(+) = 3-oxoeicosasphinganine + CO2 + CoA. Its pathway is lipid metabolism; sphingolipid metabolism. With respect to regulation, SPT complex catalytic activity is negatively regulated by ORMDL proteins, including ORMDL3, in the presence of ceramides. This mechanism allows to maintain ceramide levels at sufficient concentrations for the production of complex sphingolipids, but which prevents the accumulation of ceramides to levels that trigger apoptosis. Functionally, component of the serine palmitoyltransferase multisubunit enzyme (SPT) that catalyzes the initial and rate-limiting step in sphingolipid biosynthesis by condensing L-serine and activated acyl-CoA (most commonly palmitoyl-CoA) to form long-chain bases. The SPT complex is composed of SPTLC1, SPTLC2 or SPTLC3 and SPTSSA or SPTSSB. Within this complex, the heterodimer consisting of SPTLC1 and SPTLC2/SPTLC3 forms the catalytic core. The composition of the serine palmitoyltransferase (SPT) complex determines the substrate preference. The SPTLC1-SPTLC2-SPTSSA complex shows a strong preference for C16-CoA substrate, while the SPTLC1-SPTLC3-SPTSSA isozyme uses both C14-CoA and C16-CoA as substrates, with a slight preference for C14-CoA. The SPTLC1-SPTLC2-SPTSSB complex shows a strong preference for C18-CoA substrate, while the SPTLC1-SPTLC3-SPTSSB isozyme displays an ability to use a broader range of acyl-CoAs, without apparent preference. Crucial for adipogenesis. The protein is Serine palmitoyltransferase 2 of Rattus norvegicus (Rat).